Here is a 361-residue protein sequence, read N- to C-terminus: 3-dehydroquinate synthase (361 aa).

NAD(+)-binding positions include 72-77 (SGEKEK), 130-131 (TT), Lys142, and Lys151. Residues Glu184, His247, and His264 each coordinate Zn(2+).

The protein belongs to the sugar phosphate cyclases superfamily. Dehydroquinate synthase family. Co(2+) serves as cofactor. Zn(2+) is required as a cofactor. Requires NAD(+) as cofactor.

Its subcellular location is the cytoplasm. The catalysed reaction is 7-phospho-2-dehydro-3-deoxy-D-arabino-heptonate = 3-dehydroquinate + phosphate. The protein operates within metabolic intermediate biosynthesis; chorismate biosynthesis; chorismate from D-erythrose 4-phosphate and phosphoenolpyruvate: step 2/7. Its function is as follows. Catalyzes the conversion of 3-deoxy-D-arabino-heptulosonate 7-phosphate (DAHP) to dehydroquinate (DHQ). In Bacillus cereus (strain AH820), this protein is 3-dehydroquinate synthase.